The chain runs to 481 residues: Replication factor C large subunit (481 aa).

43-50 (GKPGIGKT) contributes to the ATP binding site. 2 stretches are compositionally biased toward basic and acidic residues: residues 408-433 (KVER…KDAD) and 441-457 (VPKE…ERPA). Residues 408-481 (KVEREKEPEP…HNQSTLFDGF (74 aa)) form a disordered region. The span at 471-481 (AHNQSTLFDGF) shows a compositional bias: polar residues.

It belongs to the activator 1 small subunits family. RfcL subfamily. Heteromultimer composed of small subunits (RfcS) and large subunits (RfcL).

In terms of biological role, part of the RFC clamp loader complex which loads the PCNA sliding clamp onto DNA. The polypeptide is Replication factor C large subunit (Methanoregula boonei (strain DSM 21154 / JCM 14090 / 6A8)).